The sequence spans 588 residues: Cyclomaltodextrinase (588 aa).

Histidine 247 and arginine 326 together coordinate substrate. Aspartate 328 serves as the catalytic Nucleophile. The active-site Proton donor is the glutamate 357. Substrate-binding positions include 423-424 (HD), aspartate 468, and arginine 472.

The protein belongs to the glycosyl hydrolase 13 family. As to quaternary structure, exists as a monomer or a homodimer in solution. Homodimer is more active and stable than the monomer.

It catalyses the reaction cyclomaltodextrin + H2O = linear maltodextrin. With respect to regulation, no metal dependence, but Mn(2+) increases the activity with alpha-cyclodextrin as substrate. No effect on the activity with presence or absence of Ca(2+), Zn(2+), Tween-20 or EDTA. Functionally, hydrolyzes alpha-, beta- and gamma-cyclodextrins with the highest activity with alpha-cyclodextrin (cyclomaltohexaose). Pullulan is the preferred substrate from linear substrates. Maltose is a major product of these reactions. Is also able to hydrolyze maltotriose and acarbose, and transglycosylate their hydrolytic products. Major reaction products of maltotriose and of acarbose are maltose and glucose, and glucose and pseudotrisaccharide, respectively. No activity with glucose or maltose as substrate. The polypeptide is Cyclomaltodextrinase (Geobacillus thermopakistaniensis (strain MAS1)).